A 120-amino-acid polypeptide reads, in one-letter code: Putative pterin-4-alpha-carbinolamine dehydratase (120 aa).

It belongs to the pterin-4-alpha-carbinolamine dehydratase family.

It carries out the reaction (4aS,6R)-4a-hydroxy-L-erythro-5,6,7,8-tetrahydrobiopterin = (6R)-L-erythro-6,7-dihydrobiopterin + H2O. The polypeptide is Putative pterin-4-alpha-carbinolamine dehydratase (Saccharomyces cerevisiae (strain ATCC 204508 / S288c) (Baker's yeast)).